The primary structure comprises 537 residues: Putative cysteine ligase BshC (537 aa).

The stretch at 422-450 (IEKVEGMIEQQRRLNKDLLDEVAGNQNNI) forms a coiled coil.

Belongs to the BshC family.

Involved in bacillithiol (BSH) biosynthesis. May catalyze the last step of the pathway, the addition of cysteine to glucosamine malate (GlcN-Mal) to generate BSH. This is Putative cysteine ligase BshC from Staphylococcus aureus (strain USA300).